Consider the following 287-residue polypeptide: Inositol-1-monophosphatase (287 aa).

Residues glutamate 79, aspartate 96, leucine 98, and aspartate 99 each coordinate Mg(2+). Glutamate 79 provides a ligand contact to substrate. Substrate is bound by residues 98–101 (LDGT), arginine 195, and aspartate 224. Aspartate 224 lines the Mg(2+) pocket.

The protein belongs to the inositol monophosphatase superfamily. Mg(2+) serves as cofactor.

The catalysed reaction is a myo-inositol phosphate + H2O = myo-inositol + phosphate. This is Inositol-1-monophosphatase (suhB) from Synechocystis sp. (strain ATCC 27184 / PCC 6803 / Kazusa).